Reading from the N-terminus, the 202-residue chain is FMN-dependent NADH:quinone oxidoreductase (202 aa).

Residues Ser-9, 15-17 (SVS), 95-98 (MYNF), and 139-142 (SRGG) contribute to the FMN site.

It belongs to the azoreductase type 1 family. In terms of assembly, homodimer. FMN serves as cofactor.

The catalysed reaction is 2 a quinone + NADH + H(+) = 2 a 1,4-benzosemiquinone + NAD(+). The enzyme catalyses N,N-dimethyl-1,4-phenylenediamine + anthranilate + 2 NAD(+) = 2-(4-dimethylaminophenyl)diazenylbenzoate + 2 NADH + 2 H(+). Quinone reductase that provides resistance to thiol-specific stress caused by electrophilic quinones. Its function is as follows. Also exhibits azoreductase activity. Catalyzes the reductive cleavage of the azo bond in aromatic azo compounds to the corresponding amines. The chain is FMN-dependent NADH:quinone oxidoreductase from Laribacter hongkongensis (strain HLHK9).